Here is a 227-residue protein sequence, read N- to C-terminus: Protein GET1 (227 aa).

Residues 1–3 (MSL) are Lumenal-facing. Residues 4–23 (LLTVFLIVFVTQLISWIGQN) form a helical membrane-spanning segment. The Cytoplasmic segment spans residues 24–107 (VLLEWAYNLY…SFSTKFNAVI (84 aa)). A coiled-coil region spans residues 72–96 (AKLRRSVDKGLAELEKLNSEIATAK). Residues 108-128 (WALTSGVNLVIGWWYGRKAVF) traverse the membrane as a helical segment. Over 129 to 151 (YLPEGWMGPLTWWFSFPFAPRGS) the chain is Lumenal. The helical transmembrane segment at 152–168 (VSVGVWSFACKRVLLVL) threads the bilayer. Residues 169–227 (ERMVKELFFAETQAKEVPVGFSPSSSSSSTPNPMSKASSGSPSPRRRTTVTVESEDEKS) lie on the Cytoplasmic side of the membrane. The disordered stretch occupies residues 184–227 (EVPVGFSPSSSSSSTPNPMSKASSGSPSPRRRTTVTVESEDEKS). Residues 190–211 (SPSSSSSSTPNPMSKASSGSPS) are compositionally biased toward low complexity.

It belongs to the WRB/GET1 family. Interacts with GET3.

The protein resides in the endoplasmic reticulum membrane. Functionally, required for the post-translational delivery of tail-anchored (TA) proteins to the endoplasmic reticulum. Acts as a membrane receptor for soluble GET3, which recognizes and selectively binds the transmembrane domain of TA proteins in the cytosol. This Coprinopsis cinerea (strain Okayama-7 / 130 / ATCC MYA-4618 / FGSC 9003) (Inky cap fungus) protein is Protein GET1.